Consider the following 188-residue polypeptide: Elongation factor P (188 aa).

The protein belongs to the elongation factor P family.

The protein localises to the cytoplasm. It functions in the pathway protein biosynthesis; polypeptide chain elongation. In terms of biological role, involved in peptide bond synthesis. Stimulates efficient translation and peptide-bond synthesis on native or reconstituted 70S ribosomes in vitro. Probably functions indirectly by altering the affinity of the ribosome for aminoacyl-tRNA, thus increasing their reactivity as acceptors for peptidyl transferase. In Methylorubrum extorquens (strain CM4 / NCIMB 13688) (Methylobacterium extorquens), this protein is Elongation factor P.